The sequence spans 493 residues: Reticulophagy regulator 1 (493 aa).

A disordered region spans residues methionine 1–glutamine 52. At methionine 1–glutamate 55 the chain is on the cytoplasmic side. A compositionally biased stretch (low complexity) spans glycine 37 to glutamine 52. A helical membrane pass occupies residues alanine 56 to glycine 76. Over glycine 77–arginine 87 the chain is Lumenal. Residues aspartate 80–phenylalanine 229 are reticulon homology domain. The helical transmembrane segment at proline 88–threonine 108 threads the bilayer. Topologically, residues proline 109 to histidine 114 are cytoplasmic. Residues leucine 115–serine 135 form a helical membrane-spanning segment. Residues arginine 136–threonine 204 are Lumenal-facing. Phosphoserine is present on serine 145. Residue serine 147 is modified to Phosphoserine; by CAMK2B. Serine 149 carries the phosphoserine modification. The chain crosses the membrane as a helical span at residues isoleucine 205–leucine 225. Residues cysteine 226 to histidine 493 are Cytoplasmic-facing. Residues phenylalanine 315–aspartate 326 are compositionally biased toward polar residues. 2 disordered regions span residues phenylalanine 315–leucine 394 and alanine 435–histidine 493. The span at aspartate 330–serine 344 shows a compositional bias: basic and acidic residues. Threonine 353 carries the post-translational modification Phosphothreonine. The span at glutamate 368–serine 388 shows a compositional bias: basic and acidic residues. Acidic residues predominate over residues glutamate 441–glutamate 463. The LIR motif signature appears at aspartate 449–leucine 454. Residues glycine 467 to leucine 486 are compositionally biased toward polar residues.

It belongs to the RETREG family. Homooligomer; oligomerization is enhanced following endoplasmic reticulum stress and is mediated by the reticulon homology domain. Interacts with ATG8 family modifier proteins MAP1LC3A, MAP1LC3B, GABARAP, GABARAPL1 and GABARAPL2. Phosphorylation at Ser-147 by CAMK2B enhances oligomerization and membrane scission and reticulophagy activity.

It is found in the golgi apparatus. It localises to the cis-Golgi network membrane. The protein resides in the endoplasmic reticulum membrane. Its function is as follows. Endoplasmic reticulum (ER)-anchored autophagy regulator which mediates ER delivery into lysosomes through sequestration into autophagosomes. Promotes membrane remodeling and ER scission via its membrane bending capacity and targets the fragments into autophagosomes via interaction with ATG8 family proteins. Active under basal conditions. Required for collagen quality control in a LIR motif-dependent manner. Required for long-term survival of nociceptive and autonomic ganglion neurons. This is Reticulophagy regulator 1 (RETREG1) from Bos taurus (Bovine).